An 807-amino-acid polypeptide reads, in one-letter code: Leucine--tRNA ligase (807 aa).

The 'HIGH' region signature appears at 40–51; that stretch reads PYPSGSGLHVGH. A 'KMSKS' region motif is present at residues 576 to 580; the sequence is KMSKS. ATP is bound at residue Lys579.

It belongs to the class-I aminoacyl-tRNA synthetase family.

It is found in the cytoplasm. The catalysed reaction is tRNA(Leu) + L-leucine + ATP = L-leucyl-tRNA(Leu) + AMP + diphosphate. This is Leucine--tRNA ligase from Chlorobaculum tepidum (strain ATCC 49652 / DSM 12025 / NBRC 103806 / TLS) (Chlorobium tepidum).